Reading from the N-terminus, the 100-residue chain is CCAAT/enhancer-binding protein homolog 2 (100 aa).

Disordered stretches follow at residues 1–60 and 79–100; these read MSGN…ETLE and AYAK…SSAV. Positions 17-80 constitute a bZIP domain; that stretch reads EDDYSTKRKR…SFLKEMFMAY (64 aa). The interval 23 to 48 is basic motif; that stretch reads KRKRNNEAVNRTRQKKRQEENDTAEK. Residues 24–83 adopt a coiled-coil conformation; sequence RKRNNEAVNRTRQKKRQEENDTAEKVDELKKENETLERKVEQLQKELSFLKEMFMAYAKN. The segment covering 39–60 has biased composition (basic and acidic residues); sequence RQEENDTAEKVDELKKENETLE. The interval 52 to 73 is leucine-zipper; it reads LKKENETLERKVEQLQKELSFL. Residues 88–100 show a composition bias toward pro residues; sequence GPPPPPPPSSSAV.

This sequence belongs to the bZIP family. C/EBP subfamily. As to quaternary structure, interacts with transcription factor zip-11. In terms of tissue distribution, expressed broadly in somatic tissues including the intestine.

Its subcellular location is the nucleus. Its function is as follows. Transcription factor that binds to the promoter and the enhancer regions of target genes. Regulates expression of genes involved in fat metabolism, including ech-1.1 and fat-5. Has a protective role in response to infection by the Gram-negative bacterium P.aeruginosa. Required for the activation of infection response gene irg-1 following P.aeruginosa infection. Required to prevent P.aeruginosa ToxA-mediated lethality. May also function in concert with transcription factor zip-11 to mediate immune responses, independently of the pmk-1/p38 MAPK pathway. May act together with the bZIP transcription factor, zip-2. This Caenorhabditis elegans protein is CCAAT/enhancer-binding protein homolog 2.